Consider the following 337-residue polypeptide: MLAELSHRELIKLAQKRCIPPLLPKFHKGQSGGRVCIIGGCEDYTGAPYFSANATALMGCDLTHVICEYNAGTVIKSYTPNLMVHPYLRMSNTKLDVDMDEQRKKINSLLDRIHVVVIGPGLGRDPLMLKSIKDIIRYILEKHEGKIPLVIDADGLFLVTQDSEVKEMLKSYPKGRVILTPNVVEFKRLCDAIGKKGDSHSEMGSLIAQELNCIVVEKGQSDKIFSPDSEKDMLTNSEEGSNKRVGGQGDTLTGAISCMLAFSRAMYDFKICEQEEKGESSNDKPLKNWVDYAMLSCYAGCTITRECSRLGFKAKGRAMQTTDLNDRVGEVFAKLFG.

Phosphoserine is present on serine 6. The region spanning 11–335 is the YjeF C-terminal domain; the sequence is IKLAQKRCIP…DRVGEVFAKL (325 aa). (6S)-NADPHX-binding positions include glycine 121 and 182-188; that span reads NVVEFKR. ATP is bound by residues 218-222 and 240-249; these read KGQSD and GSNKRVGGQG. Residues 224 to 246 form a disordered region; it reads IFSPDSEKDMLTNSEEGSNKRVG. Residue aspartate 250 participates in (6S)-NADPHX binding.

It belongs to the NnrD/CARKD family. Requires Mg(2+) as cofactor.

The protein resides in the cytoplasm. It catalyses the reaction (6S)-NADHX + ATP = ADP + phosphate + NADH + H(+). The enzyme catalyses (6S)-NADPHX + ATP = ADP + phosphate + NADPH + H(+). Catalyzes the dehydration of the S-form of NAD(P)HX at the expense of ATP, which is converted to ADP. Together with NAD(P)HX epimerase, which catalyzes the epimerization of the S- and R-forms, the enzyme allows the repair of both epimers of NAD(P)HX, a damaged form of NAD(P)H that is a result of enzymatic or heat-dependent hydration. In Saccharomyces cerevisiae (strain ATCC 204508 / S288c) (Baker's yeast), this protein is ATP-dependent (S)-NAD(P)H-hydrate dehydratase.